We begin with the raw amino-acid sequence, 212 residues long: MTIGLVGKKSGMTRIFTENGASVPVTVIEVEPNRVTRVKTVESDGYSAVQVTSGSRKAKHLTKAAAGQYAKSGVEAGRSLMEFRLAEGEEAPEVGGNITVSLFEAGQKVDVTGTSKGKGFQGAVKRWNFRTQDNGHGNSLAHRAPGSIGQCQTPGRVFKGKKMAGQLGNERVTVQSLEIVRVDAERNLLLVKGAVPGATDCEVIVRSAVKAR.

Residue Q152 is modified to N5-methylglutamine.

Belongs to the universal ribosomal protein uL3 family. Part of the 50S ribosomal subunit. Forms a cluster with proteins L14 and L19. In terms of processing, methylated by PrmB.

One of the primary rRNA binding proteins, it binds directly near the 3'-end of the 23S rRNA, where it nucleates assembly of the 50S subunit. The protein is Large ribosomal subunit protein uL3 of Chromohalobacter salexigens (strain ATCC BAA-138 / DSM 3043 / CIP 106854 / NCIMB 13768 / 1H11).